The primary structure comprises 53 residues: MLSWAITFLIIAIIAAVLGFGGIAGAATGIAKILFVLFLVLFVVSFFFGRRRG.

The next 2 helical transmembrane spans lie at 4-24 (WAIT…GGIA) and 29-49 (GIAK…FFFG).

It belongs to the UPF0391 family.

The protein resides in the cell membrane. This chain is UPF0391 membrane protein PA5482, found in Pseudomonas aeruginosa (strain ATCC 15692 / DSM 22644 / CIP 104116 / JCM 14847 / LMG 12228 / 1C / PRS 101 / PAO1).